Here is a 196-residue protein sequence, read N- to C-terminus: MLDRIKACFTESIQTQIAAAEALPDAISRAAMTLVQSLLNGNKILCCGNGTSAANAQHFAASMINRFETERPGLPAIALNTDNVVLTAIANDRLHDEIYAKQVRALGHAGDVLLAISTRGNSRDIVKAVEAAVTRDMTIVALTGYDGGELAGLLGQQDVEIRIPSHRSARIQEMHMLTVNCLCDLIDNTLFPHQDD.

One can recognise an SIS domain in the interval 34-196 (LVQSLLNGNK…DNTLFPHQDD (163 aa)).

Belongs to the SIS family. DiaA subfamily. Homotetramer; dimer of dimers.

Functionally, required for the timely initiation of chromosomal replication via direct interactions with the DnaA initiator protein. This Klebsiella pneumoniae (strain 342) protein is DnaA initiator-associating protein DiaA.